Consider the following 461-residue polypeptide: Early growth response factor homolog 1 (461 aa).

Disordered stretches follow at residues 1 to 25, 96 to 152, and 232 to 308; these read MALH…PSLN, TLMP…ELTL, and DVLH…YSSL. Composition is skewed to polar residues over residues 96 to 105, 129 to 144, 249 to 265, and 272 to 291; these read TLMPAPSSSY, GSNS…GNSK, LGSS…SRPS, and QRTN…SMSP. Residues 299–308 are compositionally biased toward low complexity; the sequence is YSNSASYSSL. 3 consecutive C2H2-type zinc fingers follow at residues 374 to 398, 404 to 426, and 432 to 454; these read YKCP…IRIH, FQCR…VRTH, and FSCD…TKVH.

It belongs to the EGR C2H2-type zinc-finger protein family. As to expression, expressed in sheath cells and distal tip cells of the somatic gonad, as well as in the intestine and sperm (at protein level). Expression not observed in oocytes (at protein level).

It localises to the nucleus. It is found in the cytoplasm. The protein resides in the perinuclear region. Functionally, sequence-specific DNA-binding transcription factor. Plays a role in oocyte development, acting cell-autonomously in the somatic gonad. Involved in negative regulation of oocyte MAPK activation and inhibits oocyte maturation and ovulation. This is Early growth response factor homolog 1 from Caenorhabditis elegans.